We begin with the raw amino-acid sequence, 160 residues long: Methyl-coenzyme M reductase operon protein D (160 aa).

MCR is composed of three subunits: alpha, beta, and gamma. The function of proteins C and D is not known.

The chain is Methyl-coenzyme M reductase operon protein D (mcrD) from Methanococcus vannielii.